Consider the following 399-residue polypeptide: Telomeric repeat-binding factor 2-interacting protein 1 (399 aa).

Ala-2 carries the post-translational modification N-acetylalanine. Phosphoserine is present on residues Ser-36 and Ser-43. The region spanning 78-101 (FISTQYILDCVERNERLELEAYRL) is the BRCT domain. Positions 104–132 (ASAADTGSEAKPGALAEGAAEPEPQRHAG) are disordered. The segment covering 112 to 125 (EAKPGALAEGAAEP) has biased composition (low complexity). Lys-114 is covalently cross-linked (Glycyl lysine isopeptide (Lys-Gly) (interchain with G-Cter in SUMO2)). The Myb-like domain maps to 128-188 (QRHAGRIAFT…SLKDRYLKHL (61 aa)). Phosphoserine occurs at positions 154 and 156. A Glycyl lysine isopeptide (Lys-Gly) (interchain with G-Cter in SUMO2) cross-link involves residue Lys-194. Disordered stretches follow at residues 196 to 244 (LLGD…EEIQ) and 264 to 311 (VVVD…QPEV). Ser-203 and Ser-206 each carry phosphoserine. Residues Lys-208, Lys-212, and Lys-240 each participate in a glycyl lysine isopeptide (Lys-Gly) (interchain with G-Cter in SUMO2) cross-link. Residues 280 to 304 (CDDDPPTPEEDSETQPDEEEEEEEE) show a composition bias toward acidic residues. Lys-372 participates in a covalent cross-link: Glycyl lysine isopeptide (Lys-Gly) (interchain with G-Cter in SUMO2). Positions 383-399 (KKFGAQNVARRIEFRKK) match the Nuclear localization signal motif.

It belongs to the RAP1 family. As to quaternary structure, associates with the I-kappa-B-kinase (IKK) core complex, composed of CHUK, IKBKB and IKBKG. Homodimer. Component of the shelterin complex (telosome) composed of TERF1, TERF2, TINF2, TERF2IP ACD and POT1. Interacts with TERF2; the interaction is direct. Does not interact with TERF1. Interacts with SLX4/BTBD12. Ubiquitous. Highly expressed.

It localises to the nucleus. The protein resides in the cytoplasm. Its subcellular location is the chromosome. The protein localises to the telomere. Its function is as follows. Acts both as a regulator of telomere function and as a transcription regulator. Involved in the regulation of telomere length and protection as a component of the shelterin complex (telosome). In contrast to other components of the shelterin complex, it is dispensible for telomere capping and does not participate in the protection of telomeres against non-homologous end-joining (NHEJ)-mediated repair. Instead, it is required to negatively regulate telomere recombination and is essential for repressing homology-directed repair (HDR), which can affect telomere length. Does not bind DNA directly: recruited to telomeric double-stranded 5'-TTAGGG-3' repeats via its interaction with TERF2. Independently of its function in telomeres, also acts as a transcription regulator: recruited to extratelomeric 5'-TTAGGG-3' sites via its association with TERF2 or other factors, and regulates gene expression. When cytoplasmic, associates with the I-kappa-B-kinase (IKK) complex and acts as a regulator of the NF-kappa-B signaling by promoting IKK-mediated phosphorylation of RELA/p65, leading to activate expression of NF-kappa-B target genes. This chain is Telomeric repeat-binding factor 2-interacting protein 1 (TERF2IP), found in Homo sapiens (Human).